Consider the following 176-residue polypeptide: WASH complex subunit 3 (176 aa).

Residues 47 to 74 (ETKFVEMERQLQKTEAALIILEAKLASI) adopt a coiled-coil conformation. 2 disordered regions span residues 84–123 (ATEA…PESV) and 152–176 (KMQS…GQRE). Residues 104 to 115 (TTEPPTTENPTE) are compositionally biased toward low complexity.

It belongs to the CCDC53 family. In terms of assembly, component of the WASH complex.

The protein localises to the early endosome. In terms of biological role, acts at least in part as component of the WASH complex which may regulate wash nucleation-promoting factor (NPF) activity and is required for its membrane targeting during endosomal sorting. During embryogenesis, not involved in the wash-dependent developmental migration of hemocytes anteriorly from the tail. The protein is WASH complex subunit 3 of Drosophila melanogaster (Fruit fly).